We begin with the raw amino-acid sequence, 329 residues long: MPWWTDALYWLPRGVSWSDMYNKTTEPGYMYPHYSHLWMTVLTGISLIIYRFVFENYIFVPLAHFLSRKNPPETRRGTLDREKKYSRMAECAMRALYYTISFVCGLYLVLHESHLYDITECWRNWPFHPIPNAVAWYYWIQGGFYIALVFGILFLDAKRSDFWQMLVHHFITLALIGVSWTMNMVRVGTLILVSHDAVDILIDVGKILRYEQFETALTICFAGVLFVWVATRLVYYPFWIIRSVWFDAPALIQDDYEWLNFDQQPQAPRFIMLLLTALLILHIFWAYILFKIAYDTIQEGVVDDVREDFDEQSLVNREKAKQQNKNKDD.

N22 carries N-linked (GlcNAc...) asparagine glycosylation. The next 7 membrane-spanning stretches (helical) occupy residues 41–61 (VLTG…IFVP), 95–115 (ALYY…ESHL), 134–154 (VAWY…GILF), 162–182 (FWQM…SWTM), 187–207 (VGTL…VGKI), 221–241 (FAGV…FWII), and 270–290 (FIML…YILF). A TLC domain is found at 86-298 (SRMAECAMRA…LFKIAYDTIQ (213 aa)).

Belongs to the sphingosine N-acyltransferase family. Strong expression in the gut, the posterior bulb of the pharynx, the hypoderm, and unidentified cells of the head and the tail.

It localises to the membrane. The catalysed reaction is a very long-chain fatty acyl-CoA + a sphingoid base = an N-(very-long-chain fatty acyl)-sphingoid base + CoA + H(+). It catalyses the reaction a fatty acyl-CoA + sphinganine = an N-acylsphinganine + CoA + H(+). It carries out the reaction docosanoyl-CoA + sphinganine = N-docosanoylsphinganine + CoA + H(+). The enzyme catalyses sphinganine + tetradecanoyl-CoA = N-(tetradecanoyl)-sphinganine + CoA + H(+). The catalysed reaction is eicosanoyl-CoA + sphinganine = N-eicosanoylsphinganine + CoA + H(+). It catalyses the reaction 15-methylhexadecasphinganine + a fatty acyl-CoA = an N-acyl-15-methylhexadecasphinganine + CoA + H(+). Its pathway is lipid metabolism; sphingolipid metabolism. In terms of biological role, catalyzes the acylation of sphingoid bases to form ceramides, which are key players in cell signaling events such as tolerances to heat, oxidation, and ultraviolet stress. C.elegans contain specific sphingoid bases, which are unique or different in structure compared to the sphingoid bases found in other animals. Two examples of these distinctive compounds are: 15-methylhexadecasphinganine and 15-methylhexadecasphing-4-enine. Exhibits substrate preference for long and very long fatty acyl-coA chains (C20-23). Required for adaptation of the nematode to anoxia. Anoxia tolerance may require one or more of the ceramide species that are either specifically or preferentially synthesized by HYL-2, and seems to be affected by a pathway that is parallel to that involving daf-2. In Caenorhabditis elegans, this protein is Ceramide synthase hyl-2 (hyl-2).